We begin with the raw amino-acid sequence, 106 residues long: Large ribosomal subunit protein uL23 (106 aa).

It belongs to the universal ribosomal protein uL23 family. Part of the 50S ribosomal subunit. Contacts protein L29, and trigger factor when it is bound to the ribosome.

In terms of biological role, one of the early assembly proteins it binds 23S rRNA. One of the proteins that surrounds the polypeptide exit tunnel on the outside of the ribosome. Forms the main docking site for trigger factor binding to the ribosome. In Acinetobacter baumannii (strain SDF), this protein is Large ribosomal subunit protein uL23.